The chain runs to 557 residues: MARLGLLALLCTLAALSASLLAAELKSKSCSEVRRLYVSKGFNKNDAPLYEINGDHLKICPQDYTCCSQEMEEKYSLQSKDDFKTVVSEQCNHLQAIFASRYKKFDEFFKELLENAEKSLNDMFVKTYGHLYMQNSELFKDLFVELKRYYVAGNVNLEEMLNDFWARLLERMFRLVNSQYHFTDEYLECVSKYTEQLKPFGDVPRKLKLQVTRAFVAARTFAQGLAVARDVVSKVSVVNPTAQCTHALLKMIYCSHCRGLVTVKPCYNYCSNIMRGCLANQGDLDFEWNNFIDAMLMVAERLEGPFNIESVMDPIDVKISDAIMNMQDNSVQVSQKVFQGCGPPKPLPAGRISRSISESAFSARFRPYHPEQRPTTAAGTSLDRLVTDVKEKLKQAKKFWSSLPSTVCNDERMAAGNENEDDCWNGKGKSRYLFAVTGNGLANQGNNPEVQVDTSKPDILILRQIMALRVMTSKMKNAYNGNDVDFFDISDESSGEGSGSGCEYQQCPSEFEYNATDHSGKSANEKADSAGGAHAEAKPYLLAALCILFLAVQGEWR.

The N-terminal stretch at 1–18 (MARLGLLALLCTLAALSA) is a signal peptide. At S357 the chain carries Phosphoserine. S494, S498, and S500 each carry an O-linked (Xyl...) (glycosaminoglycan) serine glycan. The N-linked (GlcNAc...) asparagine glycan is linked to N514. A lipid anchor (GPI-anchor amidated serine) is attached at S529. Residues 530 to 557 (AGGAHAEAKPYLLAALCILFLAVQGEWR) constitute a propeptide, removed in mature form.

The protein belongs to the glypican family. In terms of tissue distribution, highly expressed in developing brain and kidney.

Its subcellular location is the cell membrane. It localises to the secreted. The protein localises to the extracellular space. Cell surface proteoglycan that bears heparan sulfate. May be involved in the development of kidney tubules and of the central nervous system. This chain is Glypican-4 (Gpc4), found in Mus musculus (Mouse).